We begin with the raw amino-acid sequence, 185 residues long: Ribonuclease HII (185 aa).

The 185-residue stretch at Met-1–Phe-185 folds into the RNase H type-2 domain. A divalent metal cation-binding residues include Asp-7, Glu-8, and Asp-96.

It belongs to the RNase HII family. Mn(2+) is required as a cofactor. The cofactor is Mg(2+).

Its subcellular location is the cytoplasm. The enzyme catalyses Endonucleolytic cleavage to 5'-phosphomonoester.. Functionally, endonuclease that specifically degrades the RNA of RNA-DNA hybrids. This Campylobacter hominis (strain ATCC BAA-381 / DSM 21671 / CCUG 45161 / LMG 19568 / NCTC 13146 / CH001A) protein is Ribonuclease HII.